A 440-amino-acid chain; its full sequence is Asparagine--tRNA ligase (440 aa).

The protein belongs to the class-II aminoacyl-tRNA synthetase family. Homodimer.

The protein resides in the cytoplasm. It catalyses the reaction tRNA(Asn) + L-asparagine + ATP = L-asparaginyl-tRNA(Asn) + AMP + diphosphate + H(+). In Roseiflexus castenholzii (strain DSM 13941 / HLO8), this protein is Asparagine--tRNA ligase.